Consider the following 372-residue polypeptide: BTB/POZ and TAZ domain-containing protein 4 (372 aa).

A disordered region spans residues 14-37; it reads SADSSSVPIPPPLPSKSDGLKKKL. Residues 60–128 form the BTB domain; the sequence is ADVVIYTDNG…LYSSCYEKEE (69 aa). The TAZ-type zinc-finger motif lies at 238 to 330; it reads RIYSQLYEAM…SDQCRVPLCR (93 aa). Positions 341 to 364 are caM-binding; the sequence is KKDESRWKLLVKNVLGSKKIGGSP.

Interacts with GTE11/BET10 through the BTB domain. In terms of tissue distribution, preferentially expressed in leaves, stems and flowers.

It is found in the cytoplasm. It participates in protein modification; protein ubiquitination. May act as a substrate-specific adapter of an E3 ubiquitin-protein ligase complex (CUL3-RBX1-BTB) which mediates the ubiquitination and subsequent proteasomal degradation of target proteins. This is BTB/POZ and TAZ domain-containing protein 4 (BT4) from Arabidopsis thaliana (Mouse-ear cress).